A 345-amino-acid polypeptide reads, in one-letter code: Nicotinate-nucleotide--dimethylbenzimidazole phosphoribosyltransferase (345 aa).

The active-site Proton acceptor is the Glu312.

This sequence belongs to the CobT family.

It carries out the reaction 5,6-dimethylbenzimidazole + nicotinate beta-D-ribonucleotide = alpha-ribazole 5'-phosphate + nicotinate + H(+). Its pathway is nucleoside biosynthesis; alpha-ribazole biosynthesis; alpha-ribazole from 5,6-dimethylbenzimidazole: step 1/2. Its function is as follows. Catalyzes the synthesis of alpha-ribazole-5'-phosphate from nicotinate mononucleotide (NAMN) and 5,6-dimethylbenzimidazole (DMB). The chain is Nicotinate-nucleotide--dimethylbenzimidazole phosphoribosyltransferase from Bacteroides fragilis (strain ATCC 25285 / DSM 2151 / CCUG 4856 / JCM 11019 / LMG 10263 / NCTC 9343 / Onslow / VPI 2553 / EN-2).